The sequence spans 321 residues: Glucokinase (321 aa).

8–13 (GDVGGT) is an ATP binding site.

This sequence belongs to the bacterial glucokinase family.

The protein resides in the cytoplasm. The enzyme catalyses D-glucose + ATP = D-glucose 6-phosphate + ADP + H(+). In Salmonella arizonae (strain ATCC BAA-731 / CDC346-86 / RSK2980), this protein is Glucokinase.